A 239-amino-acid chain; its full sequence is ATP synthase subunit a (239 aa).

5 consecutive transmembrane segments (helical) span residues 17–37 (GTVC…VYFF), 75–95 (FHLL…IGLI), 113–133 (DPFV…LFGV), 182–202 (LLTL…PLAI), and 206–226 (MVWI…FVTL).

The protein belongs to the ATPase A chain family. As to quaternary structure, F-type ATPases have 2 components, CF(1) - the catalytic core - and CF(0) - the membrane proton channel. CF(1) has five subunits: alpha(3), beta(3), gamma(1), delta(1), epsilon(1). CF(0) has three main subunits: a(1), b(2) and c(9-12). The alpha and beta chains form an alternating ring which encloses part of the gamma chain. CF(1) is attached to CF(0) by a central stalk formed by the gamma and epsilon chains, while a peripheral stalk is formed by the delta and b chains.

It is found in the cell membrane. In terms of biological role, key component of the proton channel; it plays a direct role in the translocation of protons across the membrane. This is ATP synthase subunit a from Enterococcus hirae (strain ATCC 9790 / DSM 20160 / JCM 8729 / LMG 6399 / NBRC 3181 / NCIMB 6459 / NCDO 1258 / NCTC 12367 / WDCM 00089 / R).